The primary structure comprises 355 residues: MALRLLKLAPASASARVVAAGAQRVRGIHSSVQCKLRYGMWRFLLGDKASKRLTERSRVITVDGNICTGKGKLAKEIAEKLGFKHFPEAGIHYPDSITGDGKPLAADYNGNCSLEKFYDDPRSNDGNTYRLQSWLYSSRLLQYSDALEHLLTTGQGVVLERSIFSDFVFLDAMYNQGFIRKQCVDHYNEVKSVTICDYLPPHLVIYIDVPVPEVQRRIQKKGDPHEMKITSAYLQDIENAYKKTFLPEMSEKCEVLQYSAREAQDSKKVVEDIEYLKFDKGPWLKQDNHTLYHLRLLVQDKFEVLNYTSIPVFLPEVTIGAHQTDRVLHQFRELPGRKYSPGYNTEVGDKWIWLK.

A mitochondrion-targeting transit peptide spans 1–35 (MALRLLKLAPASASARVVAAGAQRVRGIHSSVQCK). The residue at position 250 (Ser-250) is a Phosphoserine; by PINK1. Position 285 is an N6-succinyllysine (Lys-285).

Belongs to the complex I NDUFA10 subunit family. In terms of assembly, complex I is composed of 45 different subunits. This a component of the hydrophobic protein fraction. FAD is required as a cofactor. In terms of processing, phosphorylation at Ser-250 by PINK1 is required for the binding and/or reduction of the complex I substrate ubiquinone.

The protein localises to the mitochondrion matrix. Accessory subunit of the mitochondrial membrane respiratory chain NADH dehydrogenase (Complex I), that is believed not to be involved in catalysis. Complex I functions in the transfer of electrons from NADH to the respiratory chain. The immediate electron acceptor for the enzyme is believed to be ubiquinone. This chain is NADH dehydrogenase [ubiquinone] 1 alpha subcomplex subunit 10, mitochondrial (NDUFA10), found in Pongo abelii (Sumatran orangutan).